The following is a 575-amino-acid chain: 2-succinyl-5-enolpyruvyl-6-hydroxy-3-cyclohexene-1-carboxylate synthase (575 aa).

Belongs to the TPP enzyme family. MenD subfamily. Homodimer. The cofactor is Mg(2+). Requires Mn(2+) as cofactor. Thiamine diphosphate serves as cofactor.

It catalyses the reaction isochorismate + 2-oxoglutarate + H(+) = 5-enolpyruvoyl-6-hydroxy-2-succinyl-cyclohex-3-ene-1-carboxylate + CO2. Its pathway is quinol/quinone metabolism; 1,4-dihydroxy-2-naphthoate biosynthesis; 1,4-dihydroxy-2-naphthoate from chorismate: step 2/7. It functions in the pathway quinol/quinone metabolism; menaquinone biosynthesis. Catalyzes the thiamine diphosphate-dependent decarboxylation of 2-oxoglutarate and the subsequent addition of the resulting succinic semialdehyde-thiamine pyrophosphate anion to isochorismate to yield 2-succinyl-5-enolpyruvyl-6-hydroxy-3-cyclohexene-1-carboxylate (SEPHCHC). The protein is 2-succinyl-5-enolpyruvyl-6-hydroxy-3-cyclohexene-1-carboxylate synthase of Syntrophus aciditrophicus (strain SB).